The sequence spans 245 residues: Adenosylcobinamide-GDP ribazoletransferase (245 aa).

5 helical membrane-spanning segments follow: residues phenylalanine 31–alanine 51, proline 61–leucine 81, valine 113–leucine 133, alanine 138–threonine 158, and leucine 192–leucine 212.

Belongs to the CobS family. Requires Mg(2+) as cofactor.

The protein localises to the cell inner membrane. It carries out the reaction alpha-ribazole + adenosylcob(III)inamide-GDP = adenosylcob(III)alamin + GMP + H(+). The enzyme catalyses alpha-ribazole 5'-phosphate + adenosylcob(III)inamide-GDP = adenosylcob(III)alamin 5'-phosphate + GMP + H(+). It participates in cofactor biosynthesis; adenosylcobalamin biosynthesis; adenosylcobalamin from cob(II)yrinate a,c-diamide: step 7/7. Its function is as follows. Joins adenosylcobinamide-GDP and alpha-ribazole to generate adenosylcobalamin (Ado-cobalamin). Also synthesizes adenosylcobalamin 5'-phosphate from adenosylcobinamide-GDP and alpha-ribazole 5'-phosphate. This is Adenosylcobinamide-GDP ribazoletransferase from Pseudomonas aeruginosa (strain UCBPP-PA14).